A 37-amino-acid polypeptide reads, in one-letter code: Large ribosomal subunit protein bL36 (37 aa).

Belongs to the bacterial ribosomal protein bL36 family.

This is Large ribosomal subunit protein bL36 from Francisella tularensis subsp. mediasiatica (strain FSC147).